The following is a 249-amino-acid chain: MAKSSLGQDSDSTAAVAVLKRAVELDAESRYQQALVCYQEGIDMLLQVLKGTKESSKRCVLRTKISGYMDRAENIKKYLDQEKEDGKYHKQIKIEENATGFSYESLFREYLHETVTEVWIEDPYIRQTHQLYNFLRFCEMLIKKPCKVRTIHLLTSGYEGLGNTQQSSGLEEIKQSLGSHGVVLEINYSSSIHDREIRFNNGWMIKIGRGLDYFKKPQGRFSLGYYDLDLRPCHETTVDIFHNKHTKKI.

An MIT domain is found at 8 to 86; sequence QDSDSTAAVA…KYLDQEKEDG (79 aa). Positions 168–231 are important for association with membranes; it reads SGLEEIKQSL…SLGYYDLDLR (64 aa).

Homodimer. Interacts (via MIT domain) with CHMP1A, CHMP1B, CHMP2A and IST1.

The protein resides in the late endosome membrane. It is found in the midbody. It localises to the membrane. Its function is as follows. Required for efficient abscission at the end of cytokinesis, together with components of the ESCRT-III complex. This chain is MIT domain-containing protein 1 (Mitd1), found in Mus musculus (Mouse).